The following is a 969-amino-acid chain: Protein translocase subunit SecA (969 aa).

Residues Gln-99, 117 to 121, and Asp-631 each bind ATP; that span reads GEGKT.

Belongs to the SecA family. Monomer and homodimer. Part of the essential Sec protein translocation apparatus which comprises SecA, SecYEG and auxiliary proteins SecDF. Other proteins may also be involved.

It is found in the cell inner membrane. Its subcellular location is the cytoplasm. It catalyses the reaction ATP + H2O + cellular proteinSide 1 = ADP + phosphate + cellular proteinSide 2.. In terms of biological role, part of the Sec protein translocase complex. Interacts with the SecYEG preprotein conducting channel. Has a central role in coupling the hydrolysis of ATP to the transfer of proteins into and across the cell membrane, serving as an ATP-driven molecular motor driving the stepwise translocation of polypeptide chains across the membrane. In Chlamydia trachomatis serovar A (strain ATCC VR-571B / DSM 19440 / HAR-13), this protein is Protein translocase subunit SecA.